The chain runs to 133 residues: ATP synthase epsilon chain, chloroplastic (133 aa).

This sequence belongs to the ATPase epsilon chain family. F-type ATPases have 2 components, CF(1) - the catalytic core - and CF(0) - the membrane proton channel. CF(1) has five subunits: alpha(3), beta(3), gamma(1), delta(1), epsilon(1). CF(0) has three main subunits: a, b and c.

The protein resides in the plastid. It is found in the chloroplast thylakoid membrane. Its function is as follows. Produces ATP from ADP in the presence of a proton gradient across the membrane. This chain is ATP synthase epsilon chain, chloroplastic, found in Atropa belladonna (Belladonna).